The sequence spans 401 residues: Formate-dependent phosphoribosylglycinamide formyltransferase (401 aa).

Residues Glu-22–Leu-23 and Glu-82 each bind N(1)-(5-phospho-beta-D-ribosyl)glycinamide. ATP is bound by residues Arg-115, Lys-157, Ser-162–Gln-167, Glu-197–Ile-200, and Glu-205. Positions Arg-120–Leu-315 constitute an ATP-grasp domain. Mg(2+) is bound by residues Glu-274 and Glu-286. Residues Asp-293, Lys-362, and Arg-369–Arg-370 each bind N(1)-(5-phospho-beta-D-ribosyl)glycinamide.

It belongs to the PurK/PurT family. Homodimer.

The enzyme catalyses N(1)-(5-phospho-beta-D-ribosyl)glycinamide + formate + ATP = N(2)-formyl-N(1)-(5-phospho-beta-D-ribosyl)glycinamide + ADP + phosphate + H(+). It participates in purine metabolism; IMP biosynthesis via de novo pathway; N(2)-formyl-N(1)-(5-phospho-D-ribosyl)glycinamide from N(1)-(5-phospho-D-ribosyl)glycinamide (formate route): step 1/1. In terms of biological role, involved in the de novo purine biosynthesis. Catalyzes the transfer of formate to 5-phospho-ribosyl-glycinamide (GAR), producing 5-phospho-ribosyl-N-formylglycinamide (FGAR). Formate is provided by PurU via hydrolysis of 10-formyl-tetrahydrofolate. The protein is Formate-dependent phosphoribosylglycinamide formyltransferase of Cupriavidus taiwanensis (strain DSM 17343 / BCRC 17206 / CCUG 44338 / CIP 107171 / LMG 19424 / R1) (Ralstonia taiwanensis (strain LMG 19424)).